Consider the following 306-residue polypeptide: Ribokinase (306 aa).

Residues 12 to 14, 40 to 44, and Glu141 contribute to the substrate site; these read NAD and GKGAN. Residues Asn185 and 221–226 contribute to the ATP site; that span reads TLGAKG. K(+) contacts are provided by Asp247 and Thr249. 252–253 serves as a coordination point for ATP; that stretch reads GD. Position 253 (Asp253) interacts with substrate. Asp253 functions as the Proton acceptor in the catalytic mechanism. The K(+) site is built by Ser283, Lys286, Gly288, and Ser292.

This sequence belongs to the carbohydrate kinase PfkB family. Ribokinase subfamily. In terms of assembly, homodimer. The cofactor is Mg(2+).

The protein resides in the cytoplasm. It catalyses the reaction D-ribose + ATP = D-ribose 5-phosphate + ADP + H(+). Its pathway is carbohydrate metabolism; D-ribose degradation; D-ribose 5-phosphate from beta-D-ribopyranose: step 2/2. Activated by a monovalent cation that binds near, but not in, the active site. The most likely occupant of the site in vivo is potassium. Ion binding induces a conformational change that may alter substrate affinity. Its function is as follows. Catalyzes the phosphorylation of ribose at O-5 in a reaction requiring ATP and magnesium. The resulting D-ribose-5-phosphate can then be used either for sythesis of nucleotides, histidine, and tryptophan, or as a component of the pentose phosphate pathway. The sequence is that of Ribokinase from Haemophilus influenzae (strain ATCC 51907 / DSM 11121 / KW20 / Rd).